Reading from the N-terminus, the 128-residue chain is Early E3 14.5 kDa protein (128 aa).

The protein belongs to the adenoviridae E3_15 family.

Functionally, protects virus-infected cells from TNF-induced cytolysis. This is Early E3 14.5 kDa protein from Human adenovirus C serotype 5 (HAdV-5).